Here is a 402-residue protein sequence, read N- to C-terminus: CCA-adding enzyme (402 aa).

Residues Gly32 and Arg35 each contribute to the ATP site. The CTP site is built by Gly32 and Arg35. Mg(2+)-binding residues include Asp45 and Asp47. Residues Arg116, Asp159, Arg162, Arg165, and Arg168 each contribute to the ATP site. The CTP site is built by Arg116, Asp159, Arg162, Arg165, and Arg168.

This sequence belongs to the tRNA nucleotidyltransferase/poly(A) polymerase family. Bacterial CCA-adding enzyme type 3 subfamily. Homodimer. The cofactor is Mg(2+).

The catalysed reaction is a tRNA precursor + 2 CTP + ATP = a tRNA with a 3' CCA end + 3 diphosphate. It catalyses the reaction a tRNA with a 3' CCA end + 2 CTP + ATP = a tRNA with a 3' CCACCA end + 3 diphosphate. In terms of biological role, catalyzes the addition and repair of the essential 3'-terminal CCA sequence in tRNAs without using a nucleic acid template. Adds these three nucleotides in the order of C, C, and A to the tRNA nucleotide-73, using CTP and ATP as substrates and producing inorganic pyrophosphate. tRNA 3'-terminal CCA addition is required both for tRNA processing and repair. Also involved in tRNA surveillance by mediating tandem CCA addition to generate a CCACCA at the 3' terminus of unstable tRNAs. While stable tRNAs receive only 3'-terminal CCA, unstable tRNAs are marked with CCACCA and rapidly degraded. This chain is CCA-adding enzyme, found in Streptococcus thermophilus (strain CNRZ 1066).